The following is a 71-amino-acid chain: Exodeoxyribonuclease 7 small subunit (71 aa).

This sequence belongs to the XseB family. As to quaternary structure, heterooligomer composed of large and small subunits.

It localises to the cytoplasm. The catalysed reaction is Exonucleolytic cleavage in either 5'- to 3'- or 3'- to 5'-direction to yield nucleoside 5'-phosphates.. Bidirectionally degrades single-stranded DNA into large acid-insoluble oligonucleotides, which are then degraded further into small acid-soluble oligonucleotides. This is Exodeoxyribonuclease 7 small subunit from Clostridium botulinum (strain 657 / Type Ba4).